A 393-amino-acid chain; its full sequence is Sialyltransferase-like protein 1 (393 aa).

The Cytoplasmic segment spans residues 1–8 (MKRPLRRP). The chain crosses the membrane as a helical; Signal-anchor for type II membrane protein span at residues 9 to 27 (FAVLLFVVLCAAASFPSVL). The Lumenal segment spans residues 28–393 (RRSVGPAPVL…IAVPPVVFYH (366 aa)). Asn49, Asn212, and Asn258 each carry an N-linked (GlcNAc...) asparagine glycan.

This sequence belongs to the glycosyltransferase 29 family. Expressed in leaves and stalks. Expressed at low levels in roots.

It is found in the golgi apparatus membrane. Possesses sialyltransferase-like activity in vitro. Transfers sialic acid to the oligosaccharide Gal-beta-1,3-GalNAc and to glycoproteins such as asialofetuin, alpha-1-acid glycoprotein (NeuAc-alpha-2,3-Gal-beta-1,3-GalNAc-) and andasialo-alpha-1-acid glycoprotein. The transferred sialic acid is linked to galactose of Gal-beta-1,3-GalNAc through alpha-2,6-linkage. This chain is Sialyltransferase-like protein 1, found in Oryza sativa subsp. japonica (Rice).